Consider the following 78-residue polypeptide: Large ribosomal subunit protein bL28 (78 aa).

This sequence belongs to the bacterial ribosomal protein bL28 family.

The protein is Large ribosomal subunit protein bL28 of Prochlorococcus marinus (strain MIT 9215).